Consider the following 330-residue polypeptide: Putative [LysW]-L-2-aminoadipate/[LysW]-L-glutamate phosphate reductase (330 aa).

NADP(+) is bound at residue 10–13 (SGYI). The active site involves cysteine 142. Asparagine 297 contacts NADP(+).

It belongs to the NAGSA dehydrogenase family. Type 1 subfamily. LysY sub-subfamily.

It localises to the cytoplasm. It carries out the reaction [amino-group carrier protein]-C-terminal-N-(1-carboxy-5-oxopentan-1-yl)-L-glutamine + phosphate + NADP(+) = [amino-group carrier protein]-C-terminal-N-(1-carboxy-5-phosphooxy-5-oxopentan-1-yl)-L-glutamine + NADPH + H(+). The enzyme catalyses [amino-group carrier protein]-C-terminal-gamma-(L-glutamyl-5-semialdehyde)-L-glutamate + phosphate + NADP(+) = [amino-group carrier protein]-C-terminal-gamma-(5-phospho-L-glutamyl)-L-glutamate + NADPH + H(+). The protein operates within amino-acid biosynthesis; L-lysine biosynthesis via AAA pathway; L-lysine from L-alpha-aminoadipate (Thermus route): step 3/5. It functions in the pathway amino-acid biosynthesis; L-arginine biosynthesis. Its function is as follows. Involved in both the arginine and lysine biosynthetic pathways. The polypeptide is Putative [LysW]-L-2-aminoadipate/[LysW]-L-glutamate phosphate reductase (Pyrococcus furiosus (strain ATCC 43587 / DSM 3638 / JCM 8422 / Vc1)).